Consider the following 254-residue polypeptide: Uracil-DNA glycosylase (254 aa).

D91 (proton acceptor) is an active-site residue.

The protein belongs to the uracil-DNA glycosylase (UDG) superfamily. UNG family.

Its subcellular location is the host nucleus. It catalyses the reaction Hydrolyzes single-stranded DNA or mismatched double-stranded DNA and polynucleotides, releasing free uracil.. Excises uracil residues from the DNA which can arise as a result of misincorporation of dUMP residues by DNA polymerase or deamination of cytosines. Therefore may reduce deleterious uracil incorporation into the viral genome, particularly in terminally differentiated cells which lack DNA repair enzymes. The polypeptide is Uracil-DNA glycosylase (U81) (Homo sapiens (Human)).